The following is a 409-amino-acid chain: tRNA(Met) cytidine acetate ligase (409 aa).

Residues 7–20 (VVEYNPMHNGHLYH), Gly102, Asn169, and Arg194 contribute to the ATP site.

This sequence belongs to the TmcAL family.

It is found in the cytoplasm. It catalyses the reaction cytidine(34) in elongator tRNA(Met) + acetate + ATP = N(4)-acetylcytidine(34) in elongator tRNA(Met) + AMP + diphosphate. Functionally, catalyzes the formation of N(4)-acetylcytidine (ac(4)C) at the wobble position of elongator tRNA(Met), using acetate and ATP as substrates. First activates an acetate ion to form acetyladenylate (Ac-AMP) and then transfers the acetyl group to tRNA to form ac(4)C34. In Clostridium botulinum (strain Langeland / NCTC 10281 / Type F), this protein is tRNA(Met) cytidine acetate ligase.